Here is a 492-residue protein sequence, read N- to C-terminus: Transmembrane protein 104 homolog (492 aa).

Topologically, residues 1-18 are cytoplasmic; it reads MQSNTDSSGTSGTYSQTV. A helical transmembrane segment spans residues 19 to 39; it reads GLLYVFNLIVGTGALALPKAF. Topologically, residues 40–45 are extracellular; the sequence is QSAGWL. Residues 46–66 traverse the membrane as a helical segment; it reads LSISLLTFSAFMSYVAATFVI. The Cytoplasmic portion of the chain corresponds to 67–114; sequence EALSVANAVLSKKRRVEYDDVVVADGPSTFEIAKKVEVSEMASMFLSK. A helical transmembrane segment spans residues 115-135; the sequence is VSLVFSYFAIIIYLFGDLAIY. The Extracellular portion of the chain corresponds to 136–177; the sequence is STTVPKSAMNIVCSTINATIVKSSDPCHESWPEILTRMTVYR. The N-linked (GlcNAc...) asparagine glycan is linked to Asn-152. A helical membrane pass occupies residues 178–198; it reads FFVIVFVVVVCLPMVIAGITK. Residues 199–210 lie on the Cytoplasmic side of the membrane; sequence TRHIQIMTTLSR. Residues 211-231 traverse the membrane as a helical segment; the sequence is WAAFILMISLATMQLSSQGAA. Residues 232–238 lie on the Extracellular side of the membrane; sequence AHPPAYN. The helical transmembrane segment at 239–259 threads the bilayer; sequence FHGFGSLFGCAVYAFMCHHSI. Residues 260–275 are Cytoplasmic-facing; sequence PSLITPMRTKENVFGK. Residues 276–296 traverse the membrane as a helical segment; that stretch reads IAVVYGIVGVFYFTLSLTGAF. Topologically, residues 297–325 are extracellular; the sequence is AFEHVQDIYTLNFLHDDNTSLVYSIIDYF. N-linked (GlcNAc...) asparagine glycosylation occurs at Asn-314. Residues 326–346 traverse the membrane as a helical segment; it reads LALFPIITLTSSYPIIALTLI. Residues 347-391 are Cytoplasmic-facing; sequence NNFKVVKDILCPKTGQENESLLEADNQVEDNDTDDEREARNGNPK. A compositionally biased stretch (acidic residues) spans 367-382; that stretch reads LLEADNQVEDNDTDDE. Positions 367–387 are disordered; it reads LLEADNQVEDNDTDDEREARN. A helical membrane pass occupies residues 392 to 412; sequence TIFDVLVPTLVLALPTFLSLL. Over 413–415 the chain is Extracellular; that stretch reads TDD. The chain crosses the membrane as a helical span at residues 416–436; that stretch reads MLLLASITGSFPGVAVQFAIP. Over 437-466 the chain is Cytoplasmic; that stretch reads CLLVTAARKHARSVLNFPVPRKNNSPFQSR. A helical transmembrane segment spans residues 467–487; it reads FWIMLISSWAGFSMIMVLLNL. The Extracellular portion of the chain corresponds to 488–492; the sequence is VGVKF.

Belongs to the TMEM104 family.

The protein resides in the membrane. This is Transmembrane protein 104 homolog from Caenorhabditis briggsae.